Consider the following 608-residue polypeptide: Granule-bound starch synthase 1, chloroplastic/amyloplastic (608 aa).

Residues M1–V76 constitute a chloroplast transit peptide. K96 contributes to the ADP-alpha-D-glucose binding site.

The protein belongs to the glycosyltransferase 1 family. Bacterial/plant glycogen synthase subfamily.

Its subcellular location is the plastid. The protein localises to the chloroplast. The protein resides in the amyloplast. It catalyses the reaction an NDP-alpha-D-glucose + [(1-&gt;4)-alpha-D-glucosyl](n) = [(1-&gt;4)-alpha-D-glucosyl](n+1) + a ribonucleoside 5'-diphosphate + H(+). The protein operates within glycan biosynthesis; starch biosynthesis. Required for the synthesis of amylose. The chain is Granule-bound starch synthase 1, chloroplastic/amyloplastic (WAXY) from Ipomoea batatas (Sweet potato).